The sequence spans 414 residues: Particulate methane monooxygenase alpha subunit (414 aa).

An N-terminal signal peptide occupies residues 1–32 (MKTIKDRIAKWSAIGLLSAVAATAFYAPSASA). Cu cation is bound by residues His-33, His-48, His-72, His-137, and His-139. Residues 33 to 172 (HGEKSQAAFM…MSEFRNPVTT (140 aa)) are cupredoxin domain used to construct soluble pmoB (spmoB). 2 consecutive transmembrane segments (helical) span residues 186–206 (GNTY…IGYW) and 235–255 (VAMG…SSAN). Positions 265 to 414 (QAGTMRGMKP…IDAPLIPSFM (150 aa)) are cupredoxin domain used to construct soluble pmoB (spmoB).

In terms of assembly, m.capsulatus has two forms of methane monooxygenase, a soluble (sMMO) and a membrane-bound (particulate) type (pMMO). The particulate type is a nonamer composed of three alpha:beta:gamma heterotrimeric protomers assembled into a cylindrical structure; the beta and gamma subunits comprise the bulk of the membrane-spanning regions and the soluble regions are derived primarily from alpha subunits which form two antiparallel beta-barrel-like structures each. This assembly, also called pMMO hydroxylase (pMMO-H), is proposed to associate with methanol dehydrogenase (MDH), also designated as pMMO-R, to form the pMMO-C complex which seems to have greater methane monooxygenase activity. The cofactor is Cu(2+).

The protein resides in the membrane. It carries out the reaction methane + a quinol + O2 = methanol + a quinone + H2O. Its function is as follows. Methane monooxygenase is responsible for the initial oxygenation of methane to methanol in methanotrophs. At least in vitro, specific quinols can replace NADH as reductants. This chain is Particulate methane monooxygenase alpha subunit (pmoB1), found in Methylococcus capsulatus (strain ATCC 33009 / NCIMB 11132 / Bath).